We begin with the raw amino-acid sequence, 280 residues long: Acetyl-coenzyme A carboxylase carboxyl transferase subunit beta (280 aa).

The region spanning 28 to 280 (IMTKCPSCRT…TLTKLLAMHQ (253 aa)) is the CoA carboxyltransferase N-terminal domain. Residues Cys-32, Cys-35, Cys-51, and Cys-54 each contribute to the Zn(2+) site. Residues 32-54 (CPSCRTIMYTKDLKKNLSVCRTC) form a C4-type zinc finger.

It belongs to the AccD/PCCB family. As to quaternary structure, acetyl-CoA carboxylase is a heterohexamer composed of biotin carboxyl carrier protein (AccB), biotin carboxylase (AccC) and two subunits each of ACCase subunit alpha (AccA) and ACCase subunit beta (AccD). It depends on Zn(2+) as a cofactor.

It localises to the cytoplasm. The enzyme catalyses N(6)-carboxybiotinyl-L-lysyl-[protein] + acetyl-CoA = N(6)-biotinyl-L-lysyl-[protein] + malonyl-CoA. It functions in the pathway lipid metabolism; malonyl-CoA biosynthesis; malonyl-CoA from acetyl-CoA: step 1/1. Functionally, component of the acetyl coenzyme A carboxylase (ACC) complex. Biotin carboxylase (BC) catalyzes the carboxylation of biotin on its carrier protein (BCCP) and then the CO(2) group is transferred by the transcarboxylase to acetyl-CoA to form malonyl-CoA. This chain is Acetyl-coenzyme A carboxylase carboxyl transferase subunit beta, found in Shouchella clausii (strain KSM-K16) (Alkalihalobacillus clausii).